Here is a 167-residue protein sequence, read N- to C-terminus: DNA-directed RNA polymerase 19 kDa subunit (167 aa).

Positions 15–41 (DNDYKSYDEDDDSISDIGETSDDCCTT) are disordered. Acidic residues predominate over residues 22–36 (DEDDDSISDIGETSD).

Belongs to the poxviridae DNA-directed RNA polymerase 19 kDa subunit family. The DNA-dependent RNA polymerase used for intermediate and late genes expression consists of eight subunits (147) kDa, 133 kDa, 35 kDa, 30 kDa, 22 kDa, 19 kDa, 18 kDa and 7 kDa totalling more than 500 kDa in mass. The same holoenzyme, with the addition of the transcription-specificity factor RAP94, is used for early gene expression.

It is found in the virion. The enzyme catalyses RNA(n) + a ribonucleoside 5'-triphosphate = RNA(n+1) + diphosphate. Functionally, part of the DNA-dependent RNA polymerase which catalyzes the transcription of viral DNA into RNA using the four ribonucleoside triphosphates as substrates. Responsible for the transcription of early, intermediate and late genes. DNA-dependent RNA polymerase associates with the early transcription factor (ETF) thereby allowing the early genes transcription. Late transcription, and probably also intermediate transcription, require newly synthesized RNA polymerase. The polypeptide is DNA-directed RNA polymerase 19 kDa subunit (RPO19) (Vertebrata (FPV)).